A 296-amino-acid polypeptide reads, in one-letter code: Protein TIC 21, chloroplastic (296 aa).

The N-terminal 90 residues, 1-90 (MQSLLLPPAS…VAFSYPTSPS (90 aa)), are a transit peptide targeting the chloroplast. The next 4 membrane-spanning stretches (helical) occupy residues 125-145 (FWGQ…SIVV), 156-176 (YATA…FGYI), 208-228 (VNIL…GFLV), and 250-270 (VLAL…SHFL).

In terms of assembly, homomultimer. Part of the translocon complex. In terms of tissue distribution, ubiquitous. Highest expression in green tissues and very low levels in mature pollen.

The protein resides in the plastid. Its subcellular location is the chloroplast inner membrane. In terms of biological role, involved in chloroplast protein import across the inner envelope membrane. Also acts as a chloroplast permease regulating the iron transport and homeostasis. Involved in the uptake and sequestration of iron in plastids. The protein is Protein TIC 21, chloroplastic (TIC21) of Arabidopsis thaliana (Mouse-ear cress).